We begin with the raw amino-acid sequence, 449 residues long: mRNA-capping enzyme subunit alpha (449 aa).

The N6-GMP-lysine intermediate role is filled by lysine 66. A disordered region spans residues 405 to 449 (DERKNGAYQHHSSSFSESRQQPKAEPVAEKKQTEPKYVDDDDWSD). Residues 414–423 (HHSSSFSESR) are compositionally biased toward polar residues. Positions 424–442 (QQPKAEPVAEKKQTEPKYV) are enriched in basic and acidic residues.

It belongs to the eukaryotic GTase family. In terms of assembly, heterodimer. The mRNA-capping enzyme is composed of two separate chains alpha and beta, respectively a mRNA guanylyltransferase and an mRNA 5'-triphosphate monophosphatase.

The protein resides in the nucleus. It catalyses the reaction a 5'-end diphospho-ribonucleoside in mRNA + GTP + H(+) = a 5'-end (5'-triphosphoguanosine)-ribonucleoside in mRNA + diphosphate. In terms of biological role, second step of mRNA capping. Transfer of the GMP moiety of GTP to the 5'-end of RNA via an enzyme-GMP covalent reaction intermediate. The sequence is that of mRNA-capping enzyme subunit alpha (CEG1) from Candida glabrata (strain ATCC 2001 / BCRC 20586 / JCM 3761 / NBRC 0622 / NRRL Y-65 / CBS 138) (Yeast).